Here is a 104-residue protein sequence, read N- to C-terminus: L-rhamnose mutarotase (104 aa).

A substrate-binding site is contributed by Tyr-18. The active-site Proton donor is the His-22. Substrate-binding positions include Tyr-41 and 76 to 77 (WW).

It belongs to the rhamnose mutarotase family. Homodimer.

It localises to the cytoplasm. The enzyme catalyses alpha-L-rhamnose = beta-L-rhamnose. Its pathway is carbohydrate metabolism; L-rhamnose metabolism. Its function is as follows. Involved in the anomeric conversion of L-rhamnose. In Burkholderia cenocepacia (strain HI2424), this protein is L-rhamnose mutarotase.